The primary structure comprises 149 residues: Large ribosomal subunit protein uL24 (149 aa).

Belongs to the universal ribosomal protein uL24 family. In terms of assembly, part of the 50S ribosomal subunit.

In terms of biological role, one of two assembly initiator proteins, it binds directly to the 5'-end of the 23S rRNA, where it nucleates assembly of the 50S subunit. Functionally, located at the polypeptide exit tunnel on the outside of the subunit. The sequence is that of Large ribosomal subunit protein uL24 from Hyperthermus butylicus (strain DSM 5456 / JCM 9403 / PLM1-5).